The primary structure comprises 72 residues: UPF0352 protein Shal_2512 (72 aa).

It belongs to the UPF0352 family.

The chain is UPF0352 protein Shal_2512 from Shewanella halifaxensis (strain HAW-EB4).